A 258-amino-acid chain; its full sequence is Acetylglutamate kinase (258 aa).

Substrate contacts are provided by residues 44 to 45 (GG), Arg-66, and Asn-158. ATP contacts are provided by residues 181 to 186 (DVSGIL) and 209 to 211 (IIT).

Belongs to the acetylglutamate kinase family. ArgB subfamily. Homodimer.

It is found in the cytoplasm. The enzyme catalyses N-acetyl-L-glutamate + ATP = N-acetyl-L-glutamyl 5-phosphate + ADP. The protein operates within amino-acid biosynthesis; L-arginine biosynthesis; N(2)-acetyl-L-ornithine from L-glutamate: step 2/4. Functionally, catalyzes the ATP-dependent phosphorylation of N-acetyl-L-glutamate. The sequence is that of Acetylglutamate kinase from Yersinia pestis bv. Antiqua (strain Antiqua).